Consider the following 714-residue polypeptide: NCK-interacting protein with SH3 domain (714 aa).

In terms of domain architecture, SH3 spans 1-58 (MYRALYAFRSAEPNAMAFAAGETFLVLERSSTHWWLAARARSGETGYVPPAYLHRLQG). 2 disordered regions span residues 103-126 (TLSRRGTSASSATVMTPSTSDHHL) and 139-298 (RTGF…AAET). Residues 106–121 (RRGTSASSATVMTPST) are compositionally biased toward polar residues. Ser120 carries the phosphoserine modification. Residues 168–185 (RRAAPTTPPPPVKRRDRE) carry the Nuclear localization signal motif. At Thr174 the chain carries Phosphothreonine. Positions 200–215 (SGGSSVSSGSSASSTS) are enriched in low complexity. Positions 216–226 (MDTLYTGSSPS) are enriched in polar residues. Positions 252–263 (QPSPSKAPSPEP) are enriched in pro residues. Phosphoserine is present on residues Ser260, Ser286, and Ser673.

Associates with the intermediate filaments, vimentin and desmin. Binds the first and third SH3 domains of NCK. Binds the proline-rich domains of N-WASP through its SH3 domain. Similarly, binds diaphanous protein homolog 1 (DRF1). Binds the SH3 domains of GRB2 through its proline-rich domains. Interacts with FASLG.

It localises to the nucleus. Has an important role in stress fiber formation induced by active diaphanous protein homolog 1 (DRF1). Induces microspike formation, in vivo. In vitro, stimulates N-WASP-induced ARP2/3 complex activation in the absence of CDC42. May play an important role in the maintenance of sarcomere and/or in the assembly of myofibrils into sarcomeres. Implicated in regulation of actin polymerization and cell adhesion. In Mus musculus (Mouse), this protein is NCK-interacting protein with SH3 domain (Nckipsd).